The chain runs to 645 residues: Sodium-dependent nutrient amino acid transporter 1 (645 aa).

The tract at residues 1–48 (MELKTMPHNGANGSPQHNNNNNSNNNNNVSSDTKTDNNEKEAQKKDEG) is disordered. Topologically, residues 1-51 (MELKTMPHNGANGSPQHNNNNNSNNNNNVSSDTKTDNNEKEAQKKDEGRTN) are cytoplasmic. Residues 18 to 32 (NNNNNSNNNNNVSSD) are compositionally biased toward low complexity. Over residues 33 to 48 (TKTDNNEKEAQKKDEG) the composition is skewed to basic and acidic residues. 3 consecutive transmembrane segments (helical) span residues 52–72 (WSNG…LGNV), 85–105 (GAFL…MYYL), and 138–158 (TICI…YLFV). Asn191 and Asn205 each carry an N-linked (GlcNAc...) asparagine glycan. 7 helical membrane-spanning segments follow: residues 234 to 254 (IPDW…FLVI), 264 to 284 (AAYF…GRAV), 313 to 333 (AVVQ…MFAS), 347 to 367 (IVTT…FAIL), 407 to 427 (LFSV…IVAL), 454 to 474 (CGFL…LTLV), and 480 to 500 (TYVV…IYGL). Asn514 is a glycosylation site (N-linked (GlcNAc...) asparagine). A run of 2 helical transmembrane segments spans residues 522–542 (CWSF…MATI) and 559–579 (AGWL…WWYI).

This sequence belongs to the sodium:neurotransmitter symporter (SNF) (TC 2.A.22) family.

Its subcellular location is the membrane. Its function is as follows. Unusual broad substrate spectrum amino acid:sodium cotransporter that promotes absorption of the D isomers of essential amino acids. Neutral amino acids are the preferred substrates, especially methionine and phenylalanine. This Drosophila mojavensis (Fruit fly) protein is Sodium-dependent nutrient amino acid transporter 1.